We begin with the raw amino-acid sequence, 214 residues long: Uracil phosphoribosyltransferase (214 aa).

Residues arginine 81, arginine 106, and 133 to 141 (DPMLATGNS) contribute to the 5-phospho-alpha-D-ribose 1-diphosphate site. Uracil is bound by residues isoleucine 196 and 201 to 203 (GDA). A 5-phospho-alpha-D-ribose 1-diphosphate-binding site is contributed by aspartate 202.

It belongs to the UPRTase family. It depends on Mg(2+) as a cofactor.

It catalyses the reaction UMP + diphosphate = 5-phospho-alpha-D-ribose 1-diphosphate + uracil. It participates in pyrimidine metabolism; UMP biosynthesis via salvage pathway; UMP from uracil: step 1/1. With respect to regulation, allosterically activated by GTP. In terms of biological role, catalyzes the conversion of uracil and 5-phospho-alpha-D-ribose 1-diphosphate (PRPP) to UMP and diphosphate. The sequence is that of Uracil phosphoribosyltransferase from Legionella pneumophila (strain Paris).